A 789-amino-acid chain; its full sequence is Spermatogenesis-associated protein 20 (789 aa).

A compositionally biased stretch (basic residues) spans 1-19 (MSHHSPPPPKHKGEHKGHG). Residues 1–65 (MSHHSPPPPK…CPPPAPQKTA (65 aa)) are disordered. Residues serine 5 and serine 652 each carry the phosphoserine modification.

Testis-specific and age-dependent (at protein level). Highly expressed. Expressed in round spermatids located in the inner half-layer of the seminiferous epithelium as well as in early elongated spermatids having cytoplasmic protrusions into the tubular lumen.

The protein localises to the secreted. May play a role in fertility regulation. This Rattus norvegicus (Rat) protein is Spermatogenesis-associated protein 20 (Spata20).